We begin with the raw amino-acid sequence, 207 residues long: Uracil phosphoribosyltransferase (207 aa).

Residues Arg77, Arg102, and 129–137 (DPMLATGGS) each bind 5-phospho-alpha-D-ribose 1-diphosphate. Uracil-binding positions include Ile192 and 197–199 (GDA). Asp198 is a binding site for 5-phospho-alpha-D-ribose 1-diphosphate.

It belongs to the UPRTase family. Mg(2+) is required as a cofactor.

It catalyses the reaction UMP + diphosphate = 5-phospho-alpha-D-ribose 1-diphosphate + uracil. Its pathway is pyrimidine metabolism; UMP biosynthesis via salvage pathway; UMP from uracil: step 1/1. With respect to regulation, allosterically activated by GTP. In terms of biological role, catalyzes the conversion of uracil and 5-phospho-alpha-D-ribose 1-diphosphate (PRPP) to UMP and diphosphate. The chain is Uracil phosphoribosyltransferase from Dictyoglomus thermophilum (strain ATCC 35947 / DSM 3960 / H-6-12).